The sequence spans 474 residues: tRNA-2-methylthio-N(6)-dimethylallyladenosine synthase (474 aa).

Residues 3–120 enclose the MTTase N-terminal domain; that stretch reads KKLHIKTWGC…LPEMIDQVQR (118 aa). [4Fe-4S] cluster contacts are provided by cysteine 12, cysteine 49, cysteine 83, cysteine 157, cysteine 161, and cysteine 164. The Radical SAM core domain maps to 143–375; it reads RADGPTAFVS…QDRITQQAMR (233 aa). The region spanning 378–441 is the TRAM domain; that stretch reads RQMLGTVQRI…TNSLRGIFIR (64 aa).

This sequence belongs to the methylthiotransferase family. MiaB subfamily. As to quaternary structure, monomer. [4Fe-4S] cluster is required as a cofactor.

The protein resides in the cytoplasm. It catalyses the reaction N(6)-dimethylallyladenosine(37) in tRNA + (sulfur carrier)-SH + AH2 + 2 S-adenosyl-L-methionine = 2-methylsulfanyl-N(6)-dimethylallyladenosine(37) in tRNA + (sulfur carrier)-H + 5'-deoxyadenosine + L-methionine + A + S-adenosyl-L-homocysteine + 2 H(+). Functionally, catalyzes the methylthiolation of N6-(dimethylallyl)adenosine (i(6)A), leading to the formation of 2-methylthio-N6-(dimethylallyl)adenosine (ms(2)i(6)A) at position 37 in tRNAs that read codons beginning with uridine. This Shewanella denitrificans (strain OS217 / ATCC BAA-1090 / DSM 15013) protein is tRNA-2-methylthio-N(6)-dimethylallyladenosine synthase.